The sequence spans 153 residues: ATP synthase subunit b' (153 aa).

Residues 23-40 (LMAIQVVALTYILNSLFF) form a helical membrane-spanning segment.

Belongs to the ATPase B chain family. F-type ATPases have 2 components, F(1) - the catalytic core - and F(0) - the membrane proton channel. F(1) has five subunits: alpha(3), beta(3), gamma(1), delta(1), epsilon(1). F(0) has four main subunits: a(1), b(1), b'(1) and c(10-14). The alpha and beta chains form an alternating ring which encloses part of the gamma chain. F(1) is attached to F(0) by a central stalk formed by the gamma and epsilon chains, while a peripheral stalk is formed by the delta, b and b' chains.

Its subcellular location is the cellular thylakoid membrane. Functionally, f(1)F(0) ATP synthase produces ATP from ADP in the presence of a proton or sodium gradient. F-type ATPases consist of two structural domains, F(1) containing the extramembraneous catalytic core and F(0) containing the membrane proton channel, linked together by a central stalk and a peripheral stalk. During catalysis, ATP synthesis in the catalytic domain of F(1) is coupled via a rotary mechanism of the central stalk subunits to proton translocation. Component of the F(0) channel, it forms part of the peripheral stalk, linking F(1) to F(0). The b'-subunit is a diverged and duplicated form of b found in plants and photosynthetic bacteria. The chain is ATP synthase subunit b' from Prochlorococcus marinus (strain MIT 9215).